The following is a 498-amino-acid chain: ATP synthase subunit beta, chloroplastic (498 aa).

Residue 172 to 179 (GGAGVGKT) coordinates ATP.

Belongs to the ATPase alpha/beta chains family. F-type ATPases have 2 components, CF(1) - the catalytic core - and CF(0) - the membrane proton channel. CF(1) has five subunits: alpha(3), beta(3), gamma(1), delta(1), epsilon(1). CF(0) has four main subunits: a(1), b(1), b'(1) and c(9-12).

It localises to the plastid. Its subcellular location is the chloroplast thylakoid membrane. It catalyses the reaction ATP + H2O + 4 H(+)(in) = ADP + phosphate + 5 H(+)(out). In terms of biological role, produces ATP from ADP in the presence of a proton gradient across the membrane. The catalytic sites are hosted primarily by the beta subunits. The sequence is that of ATP synthase subunit beta, chloroplastic from Nicotiana rustica (Aztec tobacco).